The following is a 640-amino-acid chain: MLNQHTSSVPDDEHLQMAHQNSSSEVRNEAAVPDQLLTPLQPYTILLKDGETIATMYPIPAYPDLLPLGLLNFLLDEFNMEVEKGDSFPYYETLSLEEFKNVWFHNDGHVCIMVLGEIPELDYSMDTEADTNDNFGTEIETTKHTTQYKKRKERRNLNLSMQWEKQCLGIFDLKPAYPGRSAHVVTGTFLVNAGIRGKGIGKTLMETFIEWSKKLGFTSSFFPLIYGTNVGIRRILEGLNFRRIGKLPEAGILKGFDVPVDSFMYGKEFTHITKSIDLLRDPQKSIEIGKYERLKHFLETGKYPLHCDRNEKARLRVLSKTHSVLNGKLMTKGKEIIYDTDQQIQIALEIHLMEHLGINKVTSKIGEKYHWRGIKSTVSEVISRCQKCKMRYKDGTGVIIEQKRAVKQAHMLPTQHIETINNPRKSKKHDNALLGQAINFPQNIISSTLNDVEGEPTPPDTNIVQPTFQNATNSPATTAEANEANKRSEFLSSIQSTPLLDDEQSMNSFNRFVEEENSRKRRKYLDVASNGIVPHLTNNESQDHANPVNRDERDMNHSVPDLDRNDHTIMNDAMLSLEDNVMAALEMVQKEQQQKINHRGEDVTGQQIDLNNSEGNENSVTKIVNNESNTFTEHNSNIYY.

A disordered region spans residues methionine 1–alanine 30. The N-acetyltransferase domain maps to leucine 121 to proline 259. Positions proline 534–asparagine 565 are disordered. Residues asparagine 549–asparagine 565 show a composition bias toward basic and acidic residues.

Required for normal transcription at a number of loci in yeast. Affects transcription at Ty1 elements, at PHO5, STE6 and ADH2. The sequence is that of Protein SPT10 (SPT10) from Saccharomyces cerevisiae (strain ATCC 204508 / S288c) (Baker's yeast).